We begin with the raw amino-acid sequence, 236 residues long: Zinc finger AN1 domain-containing stress-associated protein 13 (236 aa).

Disordered regions lie at residues 48–81 (KEGR…PGKR) and 150–173 (TVPE…AKTK). Polar residues predominate over residues 66 to 75 (RLQLPTTSIV). Residues 170–216 (AKTKSRCAACGRRVGLMGFECRCGAVFCGAHPLLGQARLWLRLQGRA) form an AN1-type; degenerate zinc finger. Cys-176, Cys-179, Cys-197, and His-200 together coordinate Zn(2+).

May be involved in environmental stress response. The protein is Zinc finger AN1 domain-containing stress-associated protein 13 (SAP13) of Oryza sativa subsp. japonica (Rice).